Here is a 1592-residue protein sequence, read N- to C-terminus: Laminin subunit gamma-1 (1592 aa).

An N-terminal signal peptide occupies residues 1–19; sequence MRAPVLAVLAVLLLGTVRA. One can recognise a Laminin N-terminal domain in the interval 29-268; that stretch reads SPQRCMPEFV…AISDFAVGGR (240 aa). N-linked (GlcNAc...) asparagine glycans are attached at residues asparagine 43 and asparagine 117. Intrachain disulfides connect cysteine 269–cysteine 278, cysteine 271–cysteine 288, cysteine 290–cysteine 299, cysteine 302–cysteine 322, cysteine 325–cysteine 334, cysteine 327–cysteine 350, cysteine 353–cysteine 362, cysteine 365–cysteine 378, cysteine 381–cysteine 393, cysteine 383–cysteine 399, cysteine 401–cysteine 410, cysteine 413–cysteine 425, cysteine 428–cysteine 439, cysteine 430–cysteine 446, cysteine 448–cysteine 457, and cysteine 460–cysteine 475. 4 consecutive Laminin EGF-like domains span residues 269 to 324, 325 to 380, 381 to 427, and 428 to 477; these read CKCN…ECLP, CNCN…PCHA, CQCN…GCRP, and CACN…GCTP. In terms of domain architecture, Laminin IV type A spans 504 to 672; that stretch reads SGVEGWTAQQ…AGPSAPWVEI (169 aa). N-linked (GlcNAc...) asparagine glycans are attached at residues asparagine 559 and asparagine 633. 24 disulfides stabilise this stretch: cysteine 707/cysteine 716, cysteine 709/cysteine 723, cysteine 725/cysteine 734, cysteine 737/cysteine 753, cysteine 756/cysteine 764, cysteine 758/cysteine 775, cysteine 778/cysteine 787, cysteine 790/cysteine 808, cysteine 811/cysteine 825, cysteine 813/cysteine 832, cysteine 835/cysteine 844, cysteine 847/cysteine 864, cysteine 867/cysteine 881, cysteine 869/cysteine 888, cysteine 890/cysteine 899, cysteine 902/cysteine 915, cysteine 918/cysteine 930, cysteine 920/cysteine 937, cysteine 939/cysteine 948, cysteine 951/cysteine 963, cysteine 966/cysteine 978, cysteine 968/cysteine 984, cysteine 986/cysteine 995, and cysteine 998/cysteine 1011. Laminin EGF-like domains lie at 707-755, 756-810, 811-866, 867-917, 918-965, and 966-1013; these read CTCN…DCQP, CPCP…PCRI, CECS…KCRA, CSCN…GCER, CDCH…GCKP, and CDCD…GCQE. Asparagine 1005, asparagine 1041, asparagine 1048, asparagine 1090, asparagine 1144, asparagine 1158, asparagine 1188, asparagine 1206, asparagine 1253, asparagine 1363, and asparagine 1386 each carry an N-linked (GlcNAc...) asparagine glycan. The domain II and I stretch occupies residues 1013 to 1592; sequence ECPACYRLVK…CYNTPIIEKP (580 aa). Residues 1018 to 1477 adopt a coiled-coil conformation; it reads YRLVKDKVNE…DEKMAEMASN (460 aa). Positions 1456-1472 are enriched in basic and acidic residues; that stretch reads NQLKKKQAEAESDEKMA. Positions 1456–1489 are disordered; that stretch reads NQLKKKQAEAESDEKMAEMASNATKDAESNANNS. A compositionally biased stretch (polar residues) spans 1476–1489; it reads SNATKDAESNANNS. Residues asparagine 1477 and asparagine 1487 are each glycosylated (N-linked (GlcNAc...) asparagine). Residues 1515 to 1579 are a coiled coil; that stretch reads VGQLTVLEKT…ANLEDIKNTL (65 aa).

As to quaternary structure, laminin is a complex glycoprotein, consisting of three different polypeptide chains (alpha, beta, gamma), which are bound to each other by disulfide bonds into a cross-shaped molecule comprising one long and three short arms with globules at each end.

The protein resides in the secreted. It localises to the extracellular space. The protein localises to the extracellular matrix. Its subcellular location is the basement membrane. Its function is as follows. Binding to cells via a high affinity receptor, laminin is thought to mediate the attachment, migration and organization of cells into tissues during embryonic development by interacting with other extracellular matrix components. The polypeptide is Laminin subunit gamma-1 (lamc1) (Xenopus tropicalis (Western clawed frog)).